Reading from the N-terminus, the 193-residue chain is Superoxide dismutase [Fe] (193 aa).

4 residues coordinate Fe cation: His27, His74, Asp157, and His161.

Belongs to the iron/manganese superoxide dismutase family. Homodimer. The cofactor is Fe cation.

The catalysed reaction is 2 superoxide + 2 H(+) = H2O2 + O2. In terms of biological role, destroys superoxide anion radicals which are normally produced within the cells and which are toxic to biological systems. Partially complements double sodA-sodB deletions in E.coli. The protein is Superoxide dismutase [Fe] of Pseudomonas aeruginosa (strain ATCC 15692 / DSM 22644 / CIP 104116 / JCM 14847 / LMG 12228 / 1C / PRS 101 / PAO1).